The following is a 321-amino-acid chain: tRNA(Ile)-lysidine synthase (321 aa).

30–35 (SGGSDS) serves as a coordination point for ATP.

It belongs to the tRNA(Ile)-lysidine synthase family.

It localises to the cytoplasm. The enzyme catalyses cytidine(34) in tRNA(Ile2) + L-lysine + ATP = lysidine(34) in tRNA(Ile2) + AMP + diphosphate + H(+). Its function is as follows. Ligates lysine onto the cytidine present at position 34 of the AUA codon-specific tRNA(Ile) that contains the anticodon CAU, in an ATP-dependent manner. Cytidine is converted to lysidine, thus changing the amino acid specificity of the tRNA from methionine to isoleucine. The sequence is that of tRNA(Ile)-lysidine synthase from Chlamydia trachomatis serovar L2 (strain ATCC VR-902B / DSM 19102 / 434/Bu).